The following is a 434-amino-acid chain: Adenylosuccinate synthetase (434 aa).

GTP-binding positions include 15–21 (GDEGKGK) and 43–45 (GHT). Asp-16 functions as the Proton acceptor in the catalytic mechanism. Mg(2+) contacts are provided by Asp-16 and Gly-43. Residues 16-19 (DEGK), 41-44 (NAGH), Thr-133, Arg-147, Gln-228, Thr-243, and Arg-307 contribute to the IMP site. Catalysis depends on His-44, which acts as the Proton donor. 303–309 (SVTGRAR) serves as a coordination point for substrate. Residues Arg-309, 335-337 (KLD), and 418-420 (STG) each bind GTP.

It belongs to the adenylosuccinate synthetase family. As to quaternary structure, homodimer. Mg(2+) serves as cofactor.

It is found in the cytoplasm. The catalysed reaction is IMP + L-aspartate + GTP = N(6)-(1,2-dicarboxyethyl)-AMP + GDP + phosphate + 2 H(+). The protein operates within purine metabolism; AMP biosynthesis via de novo pathway; AMP from IMP: step 1/2. Functionally, plays an important role in the de novo pathway of purine nucleotide biosynthesis. Catalyzes the first committed step in the biosynthesis of AMP from IMP. The protein is Adenylosuccinate synthetase of Neisseria meningitidis serogroup C / serotype 2a (strain ATCC 700532 / DSM 15464 / FAM18).